Reading from the N-terminus, the 75-residue chain is Cytoplasmic envelopment protein 3 (75 aa).

A lipid anchor (N-myristoyl glycine; by host) is attached at Gly2. The span at 53–65 (EGLEYDEDSENDE) shows a compositional bias: acidic residues. Residues 53–75 (EGLEYDEDSENDELLFLPNKKPN) are disordered.

The protein belongs to the herpesviridae cytoplasmic envelopment protein 3 family. As to quaternary structure, interacts with BGLF2; this interaction is essential for the proper localization of each protein to the assembly complex and thus for the production of infectious virus. Post-translationally, myristoylation and palmitoylation (probably on one or more of the nearby cysteines at the N-terminus) enable membrane-binding and Golgi apparatus-specific targeting and are essential for efficient packaging. In terms of processing, phosphorylated. Phosphorylation does not seem to be required for recycling to the host Golgi apparatus. Packaging is selective for underphosphorylated forms.

Its subcellular location is the virion tegument. The protein resides in the virion membrane. The protein localises to the host cell membrane. It is found in the host Golgi apparatus membrane. Plays an important role in the cytoplasmic envelopment of tegument proteins and capsids during the assembly and egress processes. Also participates in viral entry at the fusion step probably by regulating the core fusion machinery. This Homo sapiens (Human) protein is Cytoplasmic envelopment protein 3.